We begin with the raw amino-acid sequence, 598 residues long: Peroxisomal targeting signal receptor (598 aa).

3 disordered regions span residues 1–54, 135–154, and 208–237; these read MSFM…GEMS, RGGSPAEAMQQQGPGPMQGG, and AVGKGKEVEEQTAETATATETVTETETTTE. The span at 9-22 shows a compositional bias: polar residues; that stretch reads ECSTGRNPLSQFTK. C10 is covalently cross-linked (Glycyl cysteine thioester (Cys-Gly) (interchain with G-Cter in ubiquitin)). K22 is covalently cross-linked (Glycyl lysine isopeptide (Lys-Gly) (interchain with G-Cter in ubiquitin)). Positions 23–35 are enriched in basic and acidic residues; the sequence is HTAEDRSLQHDRV. Residues 220-233 are compositionally biased toward low complexity; the sequence is AETATATETVTETE. TPR repeat units follow at residues 304–337, 338–371, 372–409, 410–447, 448–481, 482–515, and 516–549; these read PDPFKIGVELMETGGRLSEAALAFEAAVQKNTEH, AEAWGRLGACQAQNEKEDPAIRALERCIKLEPGN, LSALMNLSVSYTNEGYENAAYATLERWLATKYPEVVDQ, ARNQEPRLGNEDKFQLHSRVTELFIRAAQLSPDGANID, ADVQVGLGVLFYGNEEYDKAIDCFNAAIAVRPDD, ALLWNRLGATLANSHRSEEAIDAYYKALELRPSF, and VRARYNLGVSCINIGCYKEAAQYLLGALSMHKVE.

The protein belongs to the peroxisomal targeting signal receptor family. In terms of processing, ubiquitination at Cys-10 is UBC4-independent but requires the presence of PEX4. Ubiquitination at Lys-22 is UBC4-dependent.

It is found in the cytoplasm. The protein resides in the peroxisome membrane. Its function is as follows. Binds to the C-terminal PTS1-type tripeptide peroxisomal targeting signal (SKL-type) and plays an essential role in peroxisomal protein import. The chain is Peroxisomal targeting signal receptor (PAY32) from Yarrowia lipolytica (strain CLIB 122 / E 150) (Yeast).